Consider the following 177-residue polypeptide: ATP synthase subunit delta (177 aa).

The protein belongs to the ATPase delta chain family. In terms of assembly, F-type ATPases have 2 components, F(1) - the catalytic core - and F(0) - the membrane proton channel. F(1) has five subunits: alpha(3), beta(3), gamma(1), delta(1), epsilon(1). F(0) has three main subunits: a(1), b(2) and c(10-14). The alpha and beta chains form an alternating ring which encloses part of the gamma chain. F(1) is attached to F(0) by a central stalk formed by the gamma and epsilon chains, while a peripheral stalk is formed by the delta and b chains.

The protein resides in the cell inner membrane. F(1)F(0) ATP synthase produces ATP from ADP in the presence of a proton or sodium gradient. F-type ATPases consist of two structural domains, F(1) containing the extramembraneous catalytic core and F(0) containing the membrane proton channel, linked together by a central stalk and a peripheral stalk. During catalysis, ATP synthesis in the catalytic domain of F(1) is coupled via a rotary mechanism of the central stalk subunits to proton translocation. Its function is as follows. This protein is part of the stalk that links CF(0) to CF(1). It either transmits conformational changes from CF(0) to CF(1) or is implicated in proton conduction. This chain is ATP synthase subunit delta, found in Photorhabdus laumondii subsp. laumondii (strain DSM 15139 / CIP 105565 / TT01) (Photorhabdus luminescens subsp. laumondii).